Reading from the N-terminus, the 259-residue chain is Indole-3-glycerol phosphate synthase (259 aa).

This sequence belongs to the TrpC family.

It catalyses the reaction 1-(2-carboxyphenylamino)-1-deoxy-D-ribulose 5-phosphate + H(+) = (1S,2R)-1-C-(indol-3-yl)glycerol 3-phosphate + CO2 + H2O. The protein operates within amino-acid biosynthesis; L-tryptophan biosynthesis; L-tryptophan from chorismate: step 4/5. This chain is Indole-3-glycerol phosphate synthase, found in Rhodopirellula baltica (strain DSM 10527 / NCIMB 13988 / SH1).